The chain runs to 142 residues: ATP synthase epsilon chain (142 aa).

It belongs to the ATPase epsilon chain family. In terms of assembly, F-type ATPases have 2 components, CF(1) - the catalytic core - and CF(0) - the membrane proton channel. CF(1) has five subunits: alpha(3), beta(3), gamma(1), delta(1), epsilon(1). CF(0) has three main subunits: a, b and c.

Its subcellular location is the cell inner membrane. In terms of biological role, produces ATP from ADP in the presence of a proton gradient across the membrane. The protein is ATP synthase epsilon chain of Actinobacillus succinogenes (strain ATCC 55618 / DSM 22257 / CCUG 43843 / 130Z).